The chain runs to 138 residues: Putative pre-16S rRNA nuclease (138 aa).

It belongs to the YqgF nuclease family.

It localises to the cytoplasm. Could be a nuclease involved in processing of the 5'-end of pre-16S rRNA. The protein is Putative pre-16S rRNA nuclease of Azobacteroides pseudotrichonymphae genomovar. CFP2.